A 195-amino-acid chain; its full sequence is Large ribosomal subunit protein uL18 (195 aa).

It belongs to the universal ribosomal protein uL18 family. In terms of assembly, part of the 50S ribosomal subunit. Contacts the 5S and 23S rRNAs.

Its function is as follows. This is one of the proteins that bind and probably mediate the attachment of the 5S RNA into the large ribosomal subunit, where it forms part of the central protuberance. The chain is Large ribosomal subunit protein uL18 from Metallosphaera sedula (strain ATCC 51363 / DSM 5348 / JCM 9185 / NBRC 15509 / TH2).